The chain runs to 1063 residues: TBC1 domain family member 31 (1063 aa).

7 WD repeats span residues 33–74, 75–116, 117–157, 158–200, 201–248, 249–296, and 297–334; these read HNTS…LCGN, RFNL…TVTK, ELVS…LDTF, QRKR…CDTL, VCKY…AKQL, FRII…IQTC, and KLLF…NIYS. One can recognise a Rab-GAP TBC domain in the interval 424–599; it reads EFPTKYRMFI…KLFDNVFSNH (176 aa). A coiled-coil region spans residues 699-951; it reads ELDYLRERQA…EAKKWEEAEE (253 aa). A mediates direct interaction with PJA2 region spans residues 1050-1053; sequence QAQN.

Interacts with PJA2; the interaction is direct and recruits PJA2 to centrosomes. Interacts with OFD1; regulates its activity in cilium assembly. Interacts with PRKACA.

It localises to the cytoplasm. The protein localises to the cytoskeleton. Its subcellular location is the microtubule organizing center. The protein resides in the centrosome. It is found in the centriolar satellite. It localises to the cilium basal body. Molecular adapter which is involved in cilium biogenesis. Part of a functional complex including OFD1 a centriolar protein involved in cilium assembly. Could regulate the cAMP-dependent phosphorylation of OFD1, and its subsequent ubiquitination by PJA2 which ultimately leads to its proteasomal degradation. The chain is TBC1 domain family member 31 from Bos taurus (Bovine).